Reading from the N-terminus, the 194-residue chain is MISRLTGKLVEKNPPQIVIDVNGVGYEADVSMQTFYNLPPVGESVQLFTQLIIREDAHLLFGFATAEERKTFRQLIKVGGIGAKTALGILSAMTADELAQAVAEEDVKRLSSAPGIGKKTAERMVLELRGKLVAHAVTDGLFAAAPAADETEDIVGTLLALGYSEREAKAAVKGVPEGTDVGEGVRLALKNLLK.

Residues 1–64 form a domain I region; the sequence is MISRLTGKLV…EDAHLLFGFA (64 aa). The interval 65–143 is domain II; the sequence is TAEERKTFRQ…AHAVTDGLFA (79 aa). The segment at 144 to 147 is flexible linker; that stretch reads AAPA. The tract at residues 147 to 194 is domain III; the sequence is AADETEDIVGTLLALGYSEREAKAAVKGVPEGTDVGEGVRLALKNLLK.

It belongs to the RuvA family. Homotetramer. Forms an RuvA(8)-RuvB(12)-Holliday junction (HJ) complex. HJ DNA is sandwiched between 2 RuvA tetramers; dsDNA enters through RuvA and exits via RuvB. An RuvB hexamer assembles on each DNA strand where it exits the tetramer. Each RuvB hexamer is contacted by two RuvA subunits (via domain III) on 2 adjacent RuvB subunits; this complex drives branch migration. In the full resolvosome a probable DNA-RuvA(4)-RuvB(12)-RuvC(2) complex forms which resolves the HJ.

It localises to the cytoplasm. Its function is as follows. The RuvA-RuvB-RuvC complex processes Holliday junction (HJ) DNA during genetic recombination and DNA repair, while the RuvA-RuvB complex plays an important role in the rescue of blocked DNA replication forks via replication fork reversal (RFR). RuvA specifically binds to HJ cruciform DNA, conferring on it an open structure. The RuvB hexamer acts as an ATP-dependent pump, pulling dsDNA into and through the RuvAB complex. HJ branch migration allows RuvC to scan DNA until it finds its consensus sequence, where it cleaves and resolves the cruciform DNA. The sequence is that of Holliday junction branch migration complex subunit RuvA from Neisseria meningitidis serogroup A / serotype 4A (strain DSM 15465 / Z2491).